Reading from the N-terminus, the 146-residue chain is Hemoglobin subunit beta (146 aa).

Val-1 is subject to N-acetylvaline. Residues 2–146 enclose the Globin domain; it reads HLTADEKAAV…VATALAHKYH (145 aa). Thr-12 carries the phosphothreonine modification. At Ser-44 the chain carries Phosphoserine. Residue Lys-59 is modified to N6-acetyllysine. His-63 contributes to the heme b binding site. N6-acetyllysine is present on Lys-82. His-92 contacts heme b. S-nitrosocysteine is present on Cys-93. Lys-144 is modified (N6-acetyllysine).

Belongs to the globin family. Heterotetramer of two alpha chains and two beta chains. As to expression, red blood cells.

Involved in oxygen transport from the lung to the various peripheral tissues. This chain is Hemoglobin subunit beta (HBB), found in Cephalopachus bancanus (Western tarsier).